A 148-amino-acid chain; its full sequence is 3-hydroxyacyl-[acyl-carrier-protein] dehydratase FabZ (148 aa).

H55 is an active-site residue.

The protein belongs to the thioester dehydratase family. FabZ subfamily.

Its subcellular location is the cytoplasm. It carries out the reaction a (3R)-hydroxyacyl-[ACP] = a (2E)-enoyl-[ACP] + H2O. In terms of biological role, involved in unsaturated fatty acids biosynthesis. Catalyzes the dehydration of short chain beta-hydroxyacyl-ACPs and long chain saturated and unsaturated beta-hydroxyacyl-ACPs. The sequence is that of 3-hydroxyacyl-[acyl-carrier-protein] dehydratase FabZ from Haemophilus influenzae (strain PittEE).